Here is a 380-residue protein sequence, read N- to C-terminus: uncharacterized protein (380 aa).

A run of 9 helical transmembrane segments spans residues 15 to 35 (LFHP…LAFP), 45 to 65 (LFKI…PFIF), 75 to 95 (ILYL…FKIT), 98 to 118 (LFLS…FVKF), 123 to 143 (IFVD…VLIY), 182 to 202 (IIAF…MLFI), 217 to 237 (MVLL…IILL), 303 to 323 (GTIY…LGVI), and 341 to 361 (LLLA…LSLL).

The protein localises to the cell membrane. This is an uncharacterized protein from Methanocaldococcus jannaschii (strain ATCC 43067 / DSM 2661 / JAL-1 / JCM 10045 / NBRC 100440) (Methanococcus jannaschii).